Here is a 129-residue protein sequence, read N- to C-terminus: Histone H2A.J (129 aa).

Positions 1-22 are disordered; it reads MSGRGKQGGKVRAKAKSRSSRA. Serine 2 is subject to N-acetylserine. Phosphoserine is present on serine 2. Lysine 6 carries the post-translational modification N6-acetyllysine. A compositionally biased stretch (basic residues) spans 7-19; the sequence is QGGKVRAKAKSRS. Lysine 10 bears the N6-lactoyllysine; alternate mark. Residues lysine 14 and lysine 16 each participate in a glycyl lysine isopeptide (Lys-Gly) (interchain with G-Cter in ubiquitin) cross-link. Position 105 is an N5-methylglutamine (glutamine 105). A Glycyl lysine isopeptide (Lys-Gly) (interchain with G-Cter in ubiquitin) cross-link involves residue lysine 120.

It belongs to the histone H2A family. As to quaternary structure, the nucleosome is a histone octamer containing two molecules each of H2A, H2B, H3 and H4 assembled in one H3-H4 heterotetramer and two H2A-H2B heterodimers. The octamer wraps approximately 147 bp of DNA. Post-translationally, monoubiquitination of Lys-120 (H2AXK119ub) gives a specific tag for epigenetic transcriptional repression. Following DNA double-strand breaks (DSBs), it is ubiquitinated through 'Lys-63' linkage of ubiquitin moieties. In terms of processing, phosphorylation on Ser-2 is enhanced during mitosis. Phosphorylation on Ser-2 directly represses transcription.

The protein localises to the nucleus. It localises to the chromosome. Functionally, core component of nucleosome. Nucleosomes wrap and compact DNA into chromatin, limiting DNA accessibility to the cellular machineries which require DNA as a template. Histones thereby play a central role in transcription regulation, DNA repair, DNA replication and chromosomal stability. DNA accessibility is regulated via a complex set of post-translational modifications of histones, also called histone code, and nucleosome remodeling. This chain is Histone H2A.J (H2A-IX), found in Gallus gallus (Chicken).